The primary structure comprises 215 residues: ATP phosphoribosyltransferase (215 aa).

Belongs to the ATP phosphoribosyltransferase family. Short subfamily. As to quaternary structure, heteromultimer composed of HisG and HisZ subunits.

It is found in the cytoplasm. It catalyses the reaction 1-(5-phospho-beta-D-ribosyl)-ATP + diphosphate = 5-phospho-alpha-D-ribose 1-diphosphate + ATP. Its pathway is amino-acid biosynthesis; L-histidine biosynthesis; L-histidine from 5-phospho-alpha-D-ribose 1-diphosphate: step 1/9. Catalyzes the condensation of ATP and 5-phosphoribose 1-diphosphate to form N'-(5'-phosphoribosyl)-ATP (PR-ATP). Has a crucial role in the pathway because the rate of histidine biosynthesis seems to be controlled primarily by regulation of HisG enzymatic activity. The polypeptide is ATP phosphoribosyltransferase (Prochlorococcus marinus (strain MIT 9215)).